The primary structure comprises 392 residues: Speckle-type POZ protein-like A (392 aa).

Residues 31-161 (KFSYMWTINN…DDKLTLFCEV (131 aa)) form the MATH domain. One can recognise a BTB domain in the interval 200–267 (TDCSLYVGGQ…IYTGKAPNLE (68 aa)).

This sequence belongs to the Tdpoz family. Homodimer. Heterodimer with SPOP. Component of cullin-RING-based BCR (BTB-CUL3-RBX1) E3 ubiquitin-protein ligase complexes containing homodimeric SPOPL or the heterodimer formed by SPOP and SPOPL.

The protein localises to the nucleus. The protein operates within protein modification; protein ubiquitination. Its function is as follows. Component of a cullin-RING-based BCR (BTB-CUL3-RBX1) E3 ubiquitin-protein ligase complex that mediates the ubiquitination and subsequent proteasomal degradation of target proteins, but with relatively low efficiency. The sequence is that of Speckle-type POZ protein-like A (spopla) from Danio rerio (Zebrafish).